We begin with the raw amino-acid sequence, 274 residues long: Large ribosomal subunit protein uL2 (274 aa).

2 disordered regions span residues Gln36–Arg61 and Val223–Arg274. Positions Lys37–Asn46 are enriched in polar residues. Composition is skewed to basic residues over residues Thr50–Arg61 and Lys254–Arg274.

Belongs to the universal ribosomal protein uL2 family. In terms of assembly, part of the 50S ribosomal subunit. Forms a bridge to the 30S subunit in the 70S ribosome.

Functionally, one of the primary rRNA binding proteins. Required for association of the 30S and 50S subunits to form the 70S ribosome, for tRNA binding and peptide bond formation. It has been suggested to have peptidyltransferase activity; this is somewhat controversial. Makes several contacts with the 16S rRNA in the 70S ribosome. The chain is Large ribosomal subunit protein uL2 from Halorhodospira halophila (strain DSM 244 / SL1) (Ectothiorhodospira halophila (strain DSM 244 / SL1)).